Here is an 83-residue protein sequence, read N- to C-terminus: Beta-toxin Ct7 (83 aa).

The N-terminal stretch at 1–18 is a signal peptide; that stretch reads MKVLILIIASVLLIGVEC. An LCN-type CS-alpha/beta domain is found at 19–81; the sequence is KDGYPMNSEG…VWDSATNKCG (63 aa). Disulfide bonds link Cys29–Cys80, Cys33–Cys54, Cys40–Cys61, and Cys44–Cys63. Gly81 bears the Glycine amide mark. Gly82 is a propeptide.

The protein belongs to the long (4 C-C) scorpion toxin superfamily. Sodium channel inhibitor family. Beta subfamily. In terms of tissue distribution, expressed by the venom gland.

It localises to the secreted. In terms of biological role, beta toxins bind voltage-independently at site-4 of sodium channels (Nav) and shift the voltage of activation toward more negative potentials thereby affecting sodium channel activation and promoting spontaneous and repetitive firing. Is possibly toxic to mice, freshwater shrimp and crickets. This Centruroides tecomanus (Scorpion) protein is Beta-toxin Ct7.